The sequence spans 316 residues: 4-hydroxy-3-methylbut-2-enyl diphosphate reductase (316 aa).

Position 12 (Cys-12) interacts with [4Fe-4S] cluster. (2E)-4-hydroxy-3-methylbut-2-enyl diphosphate is bound by residues His-41 and His-74. The dimethylallyl diphosphate site is built by His-41 and His-74. Residues His-41 and His-74 each contribute to the isopentenyl diphosphate site. Cys-96 contributes to the [4Fe-4S] cluster binding site. His-124 contributes to the (2E)-4-hydroxy-3-methylbut-2-enyl diphosphate binding site. His-124 lines the dimethylallyl diphosphate pocket. His-124 is a binding site for isopentenyl diphosphate. Catalysis depends on Glu-126, which acts as the Proton donor. Thr-167 provides a ligand contact to (2E)-4-hydroxy-3-methylbut-2-enyl diphosphate. Position 197 (Cys-197) interacts with [4Fe-4S] cluster. (2E)-4-hydroxy-3-methylbut-2-enyl diphosphate is bound by residues Ser-225, Ser-226, Asn-227, and Ser-269. Ser-225, Ser-226, Asn-227, and Ser-269 together coordinate dimethylallyl diphosphate. Isopentenyl diphosphate is bound by residues Ser-225, Ser-226, Asn-227, and Ser-269.

Belongs to the IspH family. As to quaternary structure, homodimer. The cofactor is [4Fe-4S] cluster.

It catalyses the reaction isopentenyl diphosphate + 2 oxidized [2Fe-2S]-[ferredoxin] + H2O = (2E)-4-hydroxy-3-methylbut-2-enyl diphosphate + 2 reduced [2Fe-2S]-[ferredoxin] + 2 H(+). The enzyme catalyses dimethylallyl diphosphate + 2 oxidized [2Fe-2S]-[ferredoxin] + H2O = (2E)-4-hydroxy-3-methylbut-2-enyl diphosphate + 2 reduced [2Fe-2S]-[ferredoxin] + 2 H(+). Its pathway is isoprenoid biosynthesis; dimethylallyl diphosphate biosynthesis; dimethylallyl diphosphate from (2E)-4-hydroxy-3-methylbutenyl diphosphate: step 1/1. It functions in the pathway isoprenoid biosynthesis; isopentenyl diphosphate biosynthesis via DXP pathway; isopentenyl diphosphate from 1-deoxy-D-xylulose 5-phosphate: step 6/6. Catalyzes the conversion of 1-hydroxy-2-methyl-2-(E)-butenyl 4-diphosphate (HMBPP) into a mixture of isopentenyl diphosphate (IPP) and dimethylallyl diphosphate (DMAPP). Acts in the terminal step of the DOXP/MEP pathway for isoprenoid precursor biosynthesis. The chain is 4-hydroxy-3-methylbut-2-enyl diphosphate reductase from Escherichia coli O6:H1 (strain CFT073 / ATCC 700928 / UPEC).